The sequence spans 85 residues: UPF0335 protein Oant_1161 (85 aa).

It belongs to the UPF0335 family.

This Brucella anthropi (strain ATCC 49188 / DSM 6882 / CCUG 24695 / JCM 21032 / LMG 3331 / NBRC 15819 / NCTC 12168 / Alc 37) (Ochrobactrum anthropi) protein is UPF0335 protein Oant_1161.